The sequence spans 159 residues: Peripheral myelin protein 22 (159 aa).

Residue Met-1 is a topological domain, cytoplasmic. Residues 2 to 31 traverse the membrane as a helical segment; sequence LLLLLGIIVLHVAVLVLLFVATIVSQWIVG. The Extracellular segment spans residues 32–64; that stretch reads NGHATDLWQNCSTTSGNVQHCLSSSANEWLQSV. N-linked (GlcNAc...) asparagine glycosylation occurs at Asn-41. Residues 65 to 91 form a helical membrane-spanning segment; it reads QATMILSIIFSVLSLFLFFCQLFTLTK. The Cytoplasmic portion of the chain corresponds to 92–95; that stretch reads GGRF. The helical transmembrane segment at 96-119 threads the bilayer; sequence YITGIFQILAGLCVMSAASIYTVR. The Extracellular portion of the chain corresponds to 120 to 133; sequence HPEWHLDSAYSYGF. Residues 134-156 form a helical membrane-spanning segment; sequence AYILAWVAFPLALLSGVVYVILR. Residues 157–159 are Cytoplasmic-facing; that stretch reads KRE.

The protein belongs to the PMP-22/EMP/MP20 family. Post-translationally, ubiquitinated by the DCX(DCAF13) E3 ubiquitin ligase complex, leading to its degradation.

Its subcellular location is the cell membrane. Its function is as follows. Might be involved in growth regulation, and in myelinization in the peripheral nervous system. The protein is Peripheral myelin protein 22 (PMP22) of Equus caballus (Horse).